The primary structure comprises 150 residues: Flagellar assembly factor FliW (150 aa).

The protein belongs to the FliW family. In terms of assembly, interacts with translational regulator CsrA. Interacts with flagellins FlaB1, FlaB2 and FlaB3.

Its subcellular location is the cytoplasm. Acts as an anti-CsrA protein, binds CsrA and prevents it from repressing translation of its target genes, one of which is flagellin. Binds to flagellin and participates in the assembly of the flagellum. Functionally, binds to the C-terminal region of flagellin, which is implicated in polymerization, and participates in the assembly of the flagellum. The protein is Flagellar assembly factor FliW of Treponema pallidum (strain Nichols).